Here is a 366-residue protein sequence, read N- to C-terminus: Protein FAM110B (366 aa).

Disordered stretches follow at residues 127-152 (SSEGSSSGSGHKHSSRNWPPHRDTTD), 163-182 (KVYPTPGHGSPQESSSHVSR), and 216-252 (CSSSAPPLPPKPKVAAMKSPEADQVEPACGVSRRPSL). Residues serine 234 and serine 297 each carry the phosphoserine modification. A disordered region spans residues 313-333 (DCEQSQDSNSDLRNDDSANDR). Over residues 322–331 (SDLRNDDSAN) the composition is skewed to basic and acidic residues.

Belongs to the FAM110 family.

The protein localises to the cytoplasm. It is found in the cytoskeleton. Its subcellular location is the microtubule organizing center. The protein resides in the centrosome. In Mus musculus (Mouse), this protein is Protein FAM110B (Fam110b).